Reading from the N-terminus, the 201-residue chain is Putative ankyrin repeat protein YahD (201 aa).

ANK repeat units lie at residues 5 to 34 (NLPA…DINT), 38 to 67 (QGKT…DINK), 71 to 100 (TCLN…DLNC), 104 to 134 (FGGV…NVNQ), 138 to 172 (VGWT…SPHL), and 176 to 201 (YGKT…AAGA).

This chain is Putative ankyrin repeat protein YahD (yahD), found in Escherichia coli (strain K12).